A 497-amino-acid polypeptide reads, in one-letter code: GDP-fucose protein O-fucosyltransferase 4 (497 aa).

Residues 1–6 (MACRRR) lie on the Cytoplasmic side of the membrane. The chain crosses the membrane as a helical; Signal-anchor for type II membrane protein span at residues 7-27 (LLPCAGLGLFGVLCWVWVSFA). Residues 28 to 497 (SFPDDQLPLE…ITERRARGKH (470 aa)) lie on the Lumenal side of the membrane. The N-linked (GlcNAc...) asparagine glycan is linked to N169. C392 and C395 are disulfide-bonded. Residues 406 to 427 (RAHRKDPERNPPPLPKMASNSH) form a disordered region. Residue N474 is glycosylated (N-linked (GlcNAc...) asparagine).

This sequence belongs to the glycosyltransferase 10 family.

It is found in the endoplasmic reticulum membrane. The enzyme catalyses L-threonyl-[protein] + GDP-beta-L-fucose = 3-O-(alpha-L-fucosyl)-L-threonyl-[protein] + GDP + H(+). The catalysed reaction is L-seryl-[protein] + GDP-beta-L-fucose = 3-O-(alpha-L-fucosyl)-L-seryl-[protein] + GDP + H(+). The protein operates within protein modification; protein glycosylation. Protein O-fucosyltransferase that specifically catalyzes O-fucosylation of serine or threonine residues in EMI domains of target proteins. Attaches fucose through an O-glycosidic linkage. O-fucosylation of EMI domain-containing proteins may be required for facilitating protein folding and secretion. This chain is GDP-fucose protein O-fucosyltransferase 4 (fut11), found in Oryzias latipes (Japanese rice fish).